A 305-amino-acid chain; its full sequence is Aspartate carbamoyltransferase catalytic subunit (305 aa).

The carbamoyl phosphate site is built by arginine 60 and threonine 61. Lysine 88 serves as a coordination point for L-aspartate. Carbamoyl phosphate-binding residues include arginine 110, histidine 138, and glutamine 141. The L-aspartate site is built by arginine 171 and arginine 222. 2 residues coordinate carbamoyl phosphate: alanine 263 and proline 264.

It belongs to the aspartate/ornithine carbamoyltransferase superfamily. ATCase family. Heterododecamer (2C3:3R2) of six catalytic PyrB chains organized as two trimers (C3), and six regulatory PyrI chains organized as three dimers (R2).

It carries out the reaction carbamoyl phosphate + L-aspartate = N-carbamoyl-L-aspartate + phosphate + H(+). Its pathway is pyrimidine metabolism; UMP biosynthesis via de novo pathway; (S)-dihydroorotate from bicarbonate: step 2/3. Functionally, catalyzes the condensation of carbamoyl phosphate and aspartate to form carbamoyl aspartate and inorganic phosphate, the committed step in the de novo pyrimidine nucleotide biosynthesis pathway. The chain is Aspartate carbamoyltransferase catalytic subunit from Halalkalibacterium halodurans (strain ATCC BAA-125 / DSM 18197 / FERM 7344 / JCM 9153 / C-125) (Bacillus halodurans).